A 226-amino-acid chain; its full sequence is UPF0111 protein HI_1603 (226 aa).

The protein belongs to the UPF0111 family.

In Haemophilus influenzae (strain ATCC 51907 / DSM 11121 / KW20 / Rd), this protein is UPF0111 protein HI_1603.